The sequence spans 252 residues: Streptothricin hydrolase (252 aa).

Catalysis depends on Cys-158, which acts as the Nucleophile. The span at 230–242 (AVGPAAAPGLPVS) shows a compositional bias: low complexity. Residues 230 to 252 (AVGPAAAPGLPVSPAAPPPSPVR) are disordered. The segment covering 243–252 (PAAPPPSPVR) has biased composition (pro residues).

Belongs to the isochorismatase family.

The enzyme catalyses streptothricin F + H2O = streptothricin F acid. Catalyzes the hydrolysis of the amide bond of streptolidine lactam, thereby conferring streptothricin (ST) resistance. Can hydrolyze streptothricin-F and streptothricin-D. However, this strain is believed to be a ST nonproducer, which raises the possibility that its true role may not be its involvement in self-resistance to STs. May catalyze the hydrolysis of naturally occurring cyclic amide compounds that are structurally related to STs. The protein is Streptothricin hydrolase (sttH) of Streptomyces noursei (Streptomyces albulus).